Consider the following 285-residue polypeptide: Acetylglutamate kinase (285 aa).

Substrate-binding positions include 64-65, Arg-86, and Asn-179; that span reads GG.

Belongs to the acetylglutamate kinase family. ArgB subfamily.

It localises to the plastid. It is found in the chloroplast. The catalysed reaction is N-acetyl-L-glutamate + ATP = N-acetyl-L-glutamyl 5-phosphate + ADP. It participates in amino-acid biosynthesis; L-arginine biosynthesis; N(2)-acetyl-L-ornithine from L-glutamate: step 2/4. Catalyzes the ATP-dependent phosphorylation of N-acetyl-L-glutamate. This is Acetylglutamate kinase from Pyropia yezoensis (Susabi-nori).